The chain runs to 441 residues: Glutamyl-tRNA reductase (441 aa).

Substrate contacts are provided by residues 64–67 (TCNR), Ser123, 128–130 (ETQ), and Gln134. Cys65 (nucleophile) is an active-site residue. 203–208 (GAGEMI) serves as a coordination point for NADP(+).

The protein belongs to the glutamyl-tRNA reductase family. As to quaternary structure, homodimer.

It catalyses the reaction (S)-4-amino-5-oxopentanoate + tRNA(Glu) + NADP(+) = L-glutamyl-tRNA(Glu) + NADPH + H(+). The protein operates within porphyrin-containing compound metabolism; protoporphyrin-IX biosynthesis; 5-aminolevulinate from L-glutamyl-tRNA(Glu): step 1/2. Its function is as follows. Catalyzes the NADPH-dependent reduction of glutamyl-tRNA(Glu) to glutamate 1-semialdehyde (GSA). The chain is Glutamyl-tRNA reductase from Burkholderia pseudomallei (strain K96243).